Reading from the N-terminus, the 474-residue chain is HTH-type transcriptional regulator RamB (474 aa).

An HTH cro/C1-type domain is found at 10–64; sequence VRQLRNERGFSQAALAQMLEISPSYLNQIEHDVRPLTVAVLLRITEVFGVDATFF. A DNA-binding region (H-T-H motif) is located at residues 21–40; the sequence is QAALAQMLEISPSYLNQIEH.

This sequence belongs to the short-chain fatty acyl-CoA assimilation regulator (ScfR) family.

Involved in the control of the glyoxylate cycle. RamB negatively controls the expression of icl expression during growth on acetate as the sole carbon source. The chain is HTH-type transcriptional regulator RamB from Mycobacterium tuberculosis (strain CDC 1551 / Oshkosh).